The sequence spans 385 residues: Beta-lactamase (385 aa).

The first 20 residues, 1 to 20, serve as a signal peptide directing secretion; that stretch reads MKRLLAFCLLFFAALGQAKV. The Acyl-ester intermediate role is filled by Ser-84. Tyr-170 acts as the Proton acceptor in catalysis. 335-337 lines the substrate pocket; it reads KTG.

This sequence belongs to the class-C beta-lactamase family.

Its subcellular location is the periplasm. The enzyme catalyses a beta-lactam + H2O = a substituted beta-amino acid. In terms of biological role, this protein is a serine beta-lactamase with a substrate specificity for cephalosporins. The chain is Beta-lactamase from Lysobacter lactamgenus.